Here is a 461-residue protein sequence, read N- to C-terminus: Mannan endo-1,4-beta-mannosidase 4 (461 aa).

Residues tryptophan 80 and asparagine 195 each contribute to the substrate site. Catalysis depends on glutamate 196, which acts as the Proton donor. Position 274 (tyrosine 274) interacts with substrate. The active-site Nucleophile is glutamate 314. Substrate is bound by residues tryptophan 357 and aspartate 364.

It belongs to the glycosyl hydrolase 5 (cellulase A) family. As to expression, ubiquitous.

It catalyses the reaction Random hydrolysis of (1-&gt;4)-beta-D-mannosidic linkages in mannans, galactomannans and glucomannans.. This is Mannan endo-1,4-beta-mannosidase 4 (MAN4) from Oryza sativa subsp. japonica (Rice).